The following is an 899-amino-acid chain: Translation initiation factor IF-2 (899 aa).

2 disordered regions span residues 31 to 227 (KKAE…ATEQ) and 240 to 310 (VTTS…GFDK). Composition is skewed to polar residues over residues 36-47 (NVSQTEKQSLLS) and 73-87 (STLSVAGTGGKSKSV). 3 stretches are compositionally biased toward basic and acidic residues: residues 101-173 (SALE…EKAK), 181-219 (AKSETELLQLRREEEAKRKAEEDSQRQLEEARKMAETNE), and 247-261 (RAAEDEQDRKEETTG). Over residues 296-308 (PQVNAPTSMQQGF) the composition is skewed to polar residues. One can recognise a tr-type G domain in the interval 398 to 565 (SRAPVVTIMG…AILLQSEILE (168 aa)). Residues 407–414 (GHVDHGKT) are G1. Residue 407-414 (GHVDHGKT) participates in GTP binding. The interval 432–436 (GITQH) is G2. A G3 region spans residues 453–456 (DTPG). Residues 453 to 457 (DTPGH) and 507 to 510 (NKID) each bind GTP. Positions 507–510 (NKID) are G4. A G5 region spans residues 543 to 545 (SAK).

Belongs to the TRAFAC class translation factor GTPase superfamily. Classic translation factor GTPase family. IF-2 subfamily.

Its subcellular location is the cytoplasm. One of the essential components for the initiation of protein synthesis. Protects formylmethionyl-tRNA from spontaneous hydrolysis and promotes its binding to the 30S ribosomal subunits. Also involved in the hydrolysis of GTP during the formation of the 70S ribosomal complex. This Photobacterium profundum (strain SS9) protein is Translation initiation factor IF-2.